The following is a 120-amino-acid chain: MMSQTELLRKKSHPVDQALTPEEIQQYLTVLDGWSLQGLHIAKSFEFKNYYQTIAFVNAIAFIVHTEDHHPELEVGYNRCVVKFYTHSVNEGLGGISENDFICAAKIDALAGNQFAPMSH.

It belongs to the pterin-4-alpha-carbinolamine dehydratase family.

It carries out the reaction (4aS,6R)-4a-hydroxy-L-erythro-5,6,7,8-tetrahydrobiopterin = (6R)-L-erythro-6,7-dihydrobiopterin + H2O. The protein is Putative pterin-4-alpha-carbinolamine dehydratase of Bdellovibrio bacteriovorus (strain ATCC 15356 / DSM 50701 / NCIMB 9529 / HD100).